A 375-amino-acid chain; its full sequence is Aminomethyltransferase (375 aa).

This sequence belongs to the GcvT family. In terms of assembly, the glycine cleavage system is composed of four proteins: P, T, L and H.

It carries out the reaction N(6)-[(R)-S(8)-aminomethyldihydrolipoyl]-L-lysyl-[protein] + (6S)-5,6,7,8-tetrahydrofolate = N(6)-[(R)-dihydrolipoyl]-L-lysyl-[protein] + (6R)-5,10-methylene-5,6,7,8-tetrahydrofolate + NH4(+). Functionally, the glycine cleavage system catalyzes the degradation of glycine. This is Aminomethyltransferase from Cupriavidus taiwanensis (strain DSM 17343 / BCRC 17206 / CCUG 44338 / CIP 107171 / LMG 19424 / R1) (Ralstonia taiwanensis (strain LMG 19424)).